We begin with the raw amino-acid sequence, 155 residues long: SsrA-binding protein (155 aa).

The interval 132–155 (DKREDLKQKQMKRDVDRAIKDHMR) is disordered.

This sequence belongs to the SmpB family.

It is found in the cytoplasm. Required for rescue of stalled ribosomes mediated by trans-translation. Binds to transfer-messenger RNA (tmRNA), required for stable association of tmRNA with ribosomes. tmRNA and SmpB together mimic tRNA shape, replacing the anticodon stem-loop with SmpB. tmRNA is encoded by the ssrA gene; the 2 termini fold to resemble tRNA(Ala) and it encodes a 'tag peptide', a short internal open reading frame. During trans-translation Ala-aminoacylated tmRNA acts like a tRNA, entering the A-site of stalled ribosomes, displacing the stalled mRNA. The ribosome then switches to translate the ORF on the tmRNA; the nascent peptide is terminated with the 'tag peptide' encoded by the tmRNA and targeted for degradation. The ribosome is freed to recommence translation, which seems to be the essential function of trans-translation. In Oceanobacillus iheyensis (strain DSM 14371 / CIP 107618 / JCM 11309 / KCTC 3954 / HTE831), this protein is SsrA-binding protein.